Reading from the N-terminus, the 520-residue chain is Catalase easC (520 aa).

H71 is an active-site residue. Y361 is a binding site for heme.

It belongs to the catalase family. Heme serves as cofactor.

The protein operates within alkaloid biosynthesis; ergot alkaloid biosynthesis. In terms of biological role, catalase; part of the gene cluster that mediates the biosynthesis of fumiclavanine C, a fungal ergot alkaloid. DmaW catalyzes the first step of ergot alkaloid biosynthesis by condensing dimethylallyl diphosphate (DMAP) and tryptophan to form 4-dimethylallyl-L-tryptophan. The second step is catalyzed by the methyltransferase easF that methylates 4-dimethylallyl-L-tryptophan in the presence of S-adenosyl-L-methionine, resulting in the formation of 4-dimethylallyl-L-abrine. The catalase easC and the FAD-dependent oxidoreductase easE then transform 4-dimethylallyl-L-abrine to chanoclavine-I which is further oxidized by EasD in the presence of NAD(+), resulting in the formation of chanoclavine-I aldehyde. EasA reduces chanoclavine-I aldehyde to dihydrochanoclavine-I aldehyde that spontaneously dehydrates to form 6,8-dimethyl-6,7-didehydroergoline. EasG then catalyzes the reduction of 6,8-dimethyl-6,7-didehydroergoline to form festuclavine. Hydrolysis of festuclavine by easM then leads to the formation of fumigaclavine B which is in turn acetylated by easN to fumigaclavine A. Finally, easL catalyzes the conversion of fumigaclavine A into fumigaclavine C by attaching a dimethylallyl moiety to C-2 of the indole nucleus. This is Catalase easC from Aspergillus fumigatus (strain ATCC MYA-4609 / CBS 101355 / FGSC A1100 / Af293) (Neosartorya fumigata).